We begin with the raw amino-acid sequence, 352 residues long: C-X-C chemokine receptor type 4 (352 aa).

Positions 1–21 are important for chemokine binding and signaling; that stretch reads MEGISIYTSDNYTEEMGSGDY. The Extracellular portion of the chain corresponds to 1–38; the sequence is MEGISIYTSDNYTEEMGSGDYDSIKEPCFREENAHFNR. Tyrosine 7 is subject to Sulfotyrosine. The N-linked (GlcNAc...) asparagine glycan is linked to asparagine 11. Tyrosine 12 carries the sulfotyrosine modification. Serine 18 is a glycosylation site (O-linked (Xyl...) (chondroitin sulfate) serine). Tyrosine 21 is modified (sulfotyrosine). Cystine bridges form between cysteine 28/cysteine 274 and cysteine 109/cysteine 186. The chain crosses the membrane as a helical span at residues 39–63; sequence IFLPTIYSIIFLTGIVGNGLVILVM. Residues 64–77 are Cytoplasmic-facing; the sequence is GYQKKLRSMTDKYR. The helical transmembrane segment at 78–99 threads the bilayer; that stretch reads LHLSVADLLFVITLPFWAVDAV. Residues 94–97 form a chemokine binding region; that stretch reads WAVD. The Extracellular segment spans residues 100–110; it reads ANWYFGKFLCK. Residues 111–130 traverse the membrane as a helical segment; it reads AVHVIYTVNLYSSVLILAFI. Residues 113 to 117 are chemokine binding; that stretch reads HVIYT. Residues 131-154 are Cytoplasmic-facing; sequence SLDRYLAIVHATNSQRPRKLLAEK. An Important for signaling motif is present at residues 133–135; that stretch reads DRY. The segment at 135 to 147 is involved in dimerization; when bound to chemokine; the sequence is YLAIVHATNSQRP. Residues 155–174 form a helical membrane-spanning segment; the sequence is VVYVGVWIPALLLTIPDFIF. Residues 175 to 195 lie on the Extracellular side of the membrane; that stretch reads ANVSEADDRYICDRFYPNDLW. The interval 186–190 is chemokine binding, important for signaling; that stretch reads CDRFY. Positions 191–210 are involved in dimerization; that stretch reads PNDLWVVVFQFQHIMVGLIL. Residues 196–216 form a helical membrane-spanning segment; the sequence is VVVFQFQHIMVGLILPGIVIL. At 217 to 241 the chain is on the cytoplasmic side; it reads SCYCIIISKLSHSKGHQKRKALKTT. Residues 242–261 form a helical membrane-spanning segment; that stretch reads VILILAFFACWLPYYIGISI. The Extracellular segment spans residues 262–282; sequence DSFILLEIIRQGCEFENTVHK. The tract at residues 266 to 268 is involved in dimerization; it reads LLE. Residues 283–302 traverse the membrane as a helical segment; sequence WISITEALAFFHCCLNPILY. Residues 303-352 are Cytoplasmic-facing; that stretch reads AFLGAKFKTSAQHALTSVSRGSSLKILSKGKRGGHSSVSTESESSSFHSS. Serine 319 and serine 321 each carry phosphoserine. 2 positions are modified to phosphoserine; by PKC and GRK6: serine 324 and serine 325. Positions 329–352 are disordered; that stretch reads LSKGKRGGHSSVSTESESSSFHSS. Phosphoserine; by GRK6 is present on serine 330. Lysine 331 participates in a covalent cross-link: Glycyl lysine isopeptide (Lys-Gly) (interchain with G-Cter in ubiquitin). Over residues 337-352 the composition is skewed to low complexity; the sequence is HSSVSTESESSSFHSS. At serine 339 the chain carries Phosphoserine; by GRK6. Phosphoserine is present on residues serine 348 and serine 351.

Belongs to the G-protein coupled receptor 1 family. In terms of assembly, monomer. Can form homodimers. Interacts with CD164. Interacts with ARRB2; the interaction is dependent on the C-terminal phosphorylation of CXCR4 and allows activation of MAPK1 and MAPK3. Interacts with ARR3; the interaction is dependent on the C-terminal phosphorylation of CXCR4 and modulates calcium mobilization. Interacts with RNF113A; the interaction, enhanced by CXCL12, promotes CXCR4 ubiquitination and subsequent degradation. Interacts (via the cytoplasmic C-terminal) with ITCH (via the WW domains I and II); the interaction, enhanced by CXCL12, promotes CXCR4 ubiquitination and leads to its degradation. Interacts with extracellular ubiquitin. Interacts with DBN1; this interaction is enhanced by antigenic stimulation. Following LPS binding, may form a complex with GDF5, HSP90AA1 and HSPA8. Phosphorylated on agonist stimulation. Rapidly phosphorylated on serine and threonine residues in the C-terminal. Phosphorylation at Ser-324 and Ser-325 leads to recruitment of ITCH, ubiquitination and protein degradation. Post-translationally, ubiquitinated after ligand binding, leading to its degradation. Ubiquitinated by ITCH at the cell membrane on agonist stimulation. The ubiquitin-dependent mechanism, endosomal sorting complex required for transport (ESCRT), then targets CXCR4 for lysosomal degradation. This process is dependent also on prior Ser-/Thr-phosphorylation in the C-terminal of CXCR4. Also binding of ARRB1 to STAM negatively regulates CXCR4 sorting to lysosomes though modulating ubiquitination of SFR5S. In terms of processing, sulfation is required for efficient binding of CXCL12/SDF-1alpha and promotes its dimerization. O- and N-glycosylated. N-glycosylation can mask coreceptor function. The O-glycosylation chondroitin sulfate attachment does not affect interaction with CXCL12/SDF-1alpha nor its coreceptor activity.

The protein localises to the cell membrane. It is found in the cell junction. The protein resides in the early endosome. It localises to the late endosome. Its subcellular location is the lysosome. Receptor for the C-X-C chemokine CXCL12/SDF-1 that transduces a signal by increasing intracellular calcium ion levels and enhancing MAPK1/MAPK3 activation. Involved in the AKT signaling cascade. Plays a role in regulation of cell migration, e.g. during wound healing. Acts as a receptor for extracellular ubiquitin; leading to enhanced intracellular calcium ions and reduced cellular cAMP levels. Binds bacterial lipopolysaccharide (LPS) et mediates LPS-induced inflammatory response, including TNF secretion by monocytes. Involved in hematopoiesis and in cardiac ventricular septum formation. Also plays an essential role in vascularization of the gastrointestinal tract, probably by regulating vascular branching and/or remodeling processes in endothelial cells. Involved in cerebellar development. In the CNS, could mediate hippocampal-neuron survival. The chain is C-X-C chemokine receptor type 4 (CXCR4) from Saimiri sciureus (Common squirrel monkey).